Consider the following 341-residue polypeptide: Ribosomal RNA small subunit methyltransferase H (341 aa).

Residues 47–49 (GGY), Asp64, Phe91, Asp109, and Gln116 contribute to the S-adenosyl-L-methionine site.

The protein belongs to the methyltransferase superfamily. RsmH family.

The protein resides in the cytoplasm. The catalysed reaction is cytidine(1402) in 16S rRNA + S-adenosyl-L-methionine = N(4)-methylcytidine(1402) in 16S rRNA + S-adenosyl-L-homocysteine + H(+). Functionally, specifically methylates the N4 position of cytidine in position 1402 (C1402) of 16S rRNA. In Rhizobium etli (strain ATCC 51251 / DSM 11541 / JCM 21823 / NBRC 15573 / CFN 42), this protein is Ribosomal RNA small subunit methyltransferase H.